The sequence spans 210 residues: Large ribosomal subunit protein uL3 (210 aa).

Belongs to the universal ribosomal protein uL3 family. As to quaternary structure, part of the 50S ribosomal subunit. Forms a cluster with proteins L14 and L19.

Functionally, one of the primary rRNA binding proteins, it binds directly near the 3'-end of the 23S rRNA, where it nucleates assembly of the 50S subunit. The chain is Large ribosomal subunit protein uL3 from Caldicellulosiruptor saccharolyticus (strain ATCC 43494 / DSM 8903 / Tp8T 6331).